The primary structure comprises 201 residues: Nuclear protein UL4 (201 aa).

It belongs to the alphaherpesvirinae HHV-1 UL4 family.

It localises to the host nucleus. This is Nuclear protein UL4 from Human herpesvirus 2 (strain HG52) (HHV-2).